We begin with the raw amino-acid sequence, 387 residues long: Protein WHAT'S THIS FACTOR 9, mitochondrial (387 aa).

The N-terminal 24 residues, 1–24 (MLSIRRHAKTVASSCTNLTQKRTY), are a transit peptide targeting the mitochondrion. Residues 32–358 (KRDPYFDNIE…KKYIQLMKNS (327 aa)) form the PORR domain.

It is found in the mitochondrion. RNA-binding protein involved in group II intron splicing. Binds specific group II introns and promotes their splicing (e.g. rpl2 and ccmFC). The protein is Protein WHAT'S THIS FACTOR 9, mitochondrial of Arabidopsis thaliana (Mouse-ear cress).